We begin with the raw amino-acid sequence, 223 residues long: Probable iron-sulfur cluster repair protein HI_1677 (223 aa).

Belongs to the RIC family.

It localises to the cytoplasm. In terms of biological role, di-iron-containing protein involved in the repair of iron-sulfur clusters. The sequence is that of Probable iron-sulfur cluster repair protein HI_1677 from Haemophilus influenzae (strain ATCC 51907 / DSM 11121 / KW20 / Rd).